A 163-amino-acid polypeptide reads, in one-letter code: Putative 4-hydroxy-4-methyl-2-oxoglutarate aldolase (163 aa).

Substrate-binding positions include 76–79 (GDML) and Arg98. Asp99 serves as a coordination point for a divalent metal cation.

This sequence belongs to the class II aldolase/RraA-like family. In terms of assembly, homotrimer. Requires a divalent metal cation as cofactor.

It catalyses the reaction 4-hydroxy-4-methyl-2-oxoglutarate = 2 pyruvate. The enzyme catalyses oxaloacetate + H(+) = pyruvate + CO2. In terms of biological role, catalyzes the aldol cleavage of 4-hydroxy-4-methyl-2-oxoglutarate (HMG) into 2 molecules of pyruvate. Also contains a secondary oxaloacetate (OAA) decarboxylase activity due to the common pyruvate enolate transition state formed following C-C bond cleavage in the retro-aldol and decarboxylation reactions. This Pseudomonas putida (strain GB-1) protein is Putative 4-hydroxy-4-methyl-2-oxoglutarate aldolase.